The primary structure comprises 209 residues: ATP-dependent Clp protease proteolytic subunit (209 aa).

Ser-111 (nucleophile) is an active-site residue. His-136 is a catalytic residue.

Belongs to the peptidase S14 family. In terms of assembly, fourteen ClpP subunits assemble into 2 heptameric rings which stack back to back to give a disk-like structure with a central cavity, resembling the structure of eukaryotic proteasomes.

It localises to the cytoplasm. The catalysed reaction is Hydrolysis of proteins to small peptides in the presence of ATP and magnesium. alpha-casein is the usual test substrate. In the absence of ATP, only oligopeptides shorter than five residues are hydrolyzed (such as succinyl-Leu-Tyr-|-NHMec, and Leu-Tyr-Leu-|-Tyr-Trp, in which cleavage of the -Tyr-|-Leu- and -Tyr-|-Trp bonds also occurs).. In terms of biological role, cleaves peptides in various proteins in a process that requires ATP hydrolysis. Has a chymotrypsin-like activity. Plays a major role in the degradation of misfolded proteins. This chain is ATP-dependent Clp protease proteolytic subunit, found in Dechloromonas aromatica (strain RCB).